The sequence spans 432 residues: Adenylosuccinate synthetase (432 aa).

Residues Gly13–Lys19 and Gly41–Thr43 contribute to the GTP site. The Proton acceptor role is filled by Asp14. Mg(2+) is bound by residues Asp14 and Gly41. IMP-binding positions include Asp14–Lys17, Asn39–His42, Thr131, Arg145, Gln226, Thr241, and Arg305. Catalysis depends on His42, which acts as the Proton donor. A substrate-binding site is contributed by Ser301–Arg307. Residues Arg307, Lys333–Asp335, and Ser416–Gly418 contribute to the GTP site.

Belongs to the adenylosuccinate synthetase family. As to quaternary structure, homodimer. Mg(2+) serves as cofactor.

It localises to the cytoplasm. It catalyses the reaction IMP + L-aspartate + GTP = N(6)-(1,2-dicarboxyethyl)-AMP + GDP + phosphate + 2 H(+). It participates in purine metabolism; AMP biosynthesis via de novo pathway; AMP from IMP: step 1/2. In terms of biological role, plays an important role in the de novo pathway of purine nucleotide biosynthesis. Catalyzes the first committed step in the biosynthesis of AMP from IMP. The sequence is that of Adenylosuccinate synthetase from Neisseria gonorrhoeae (strain ATCC 700825 / FA 1090).